A 221-amino-acid polypeptide reads, in one-letter code: Urease accessory protein UreE (221 aa).

The interval 160 to 194 (VPGTNKTTGDLAEEEQETERHEPHAHAIGEHHHEK) is disordered. Positions 177 to 194 (TERHEPHAHAIGEHHHEK) are enriched in basic and acidic residues.

It belongs to the UreE family.

The protein localises to the cytoplasm. Functionally, involved in urease metallocenter assembly. Binds nickel. Probably functions as a nickel donor during metallocenter assembly. The protein is Urease accessory protein UreE of Bifidobacterium longum subsp. infantis (strain ATCC 15697 / DSM 20088 / JCM 1222 / NCTC 11817 / S12).